Reading from the N-terminus, the 378-residue chain is Nitronate monooxygenase (378 aa).

The propeptide occupies 1 to 15 (MHFPGHSSKKEESAQ). Residue 37–39 (PMY) coordinates FMN. His-196 serves as the catalytic Proton acceptor. His-196 contacts substrate. Residues 229-231 (AGG) and 252-253 (GT) each bind FMN.

It belongs to the nitronate monooxygenase family. NMO class II subfamily. In terms of assembly, homodimer. The cofactor is FMN.

It catalyses the reaction ethylnitronate + O2 = chemical entity + acetaldehyde + nitrite + H(+). Catalyzes the oxidation of alkyl nitronates to produce the corresponding carbonyl compounds and nitrites. Anionic forms of nitroalkanes are much better substrates than are neutral forms. The protein is Nitronate monooxygenase (ncd-2) of Neurospora crassa (strain ATCC 24698 / 74-OR23-1A / CBS 708.71 / DSM 1257 / FGSC 987).